The primary structure comprises 253 residues: uncharacterized protein (253 aa).

The span at 200-209 (TGREHAHKGP) shows a compositional bias: basic and acidic residues. Disordered stretches follow at residues 200–225 (TGRE…PNPA) and 234–253 (QHSP…SAAT).

In terms of tissue distribution, most abundantly expressed in gastrointestinal tissues. Expressed at lower levels in kidney and placenta. Expressed in fetal brain, liver, placenta, kidney and lung.

This is an uncharacterized protein from Homo sapiens (Human).